Here is a 401-residue protein sequence, read N- to C-terminus: Pectate lyase (401 aa).

Positions 1 to 20 (MATTILPLILFISSLAIASS) are cleaved as a signal peptide. N-linked (GlcNAc...) asparagine glycosylation occurs at Asn38. Ca(2+)-binding residues include Asp199, Asp223, and Asp227. The active site involves Arg279.

Belongs to the polysaccharide lyase 1 family. Ca(2+) is required as a cofactor. As to expression, expressed in sites of vascular differentiation and in new primordia on the flank of the shoot meristem.

The catalysed reaction is Eliminative cleavage of (1-&gt;4)-alpha-D-galacturonan to give oligosaccharides with 4-deoxy-alpha-D-galact-4-enuronosyl groups at their non-reducing ends.. It participates in glycan metabolism; pectin degradation; 2-dehydro-3-deoxy-D-gluconate from pectin: step 2/5. Functionally, involved in the degradation of pectin. May assist in the removal and modification of an existing pectin matrix in order to allow the deposition of newly synthesized walls polymers for a specialized function or to create an architecture that is extensible. The sequence is that of Pectate lyase from Zinnia elegans (Garden zinnia).